A 240-amino-acid polypeptide reads, in one-letter code: Methylthioribulose-1-phosphate dehydratase (240 aa).

The span at 1–17 (MAQEVENNNNDHLVQSS) shows a compositional bias: polar residues. Residues 1 to 20 (MAQEVENNNNDHLVQSSDPE) are disordered. A substrate-binding site is contributed by Cys-100. Residues His-117 and His-119 each contribute to the Zn(2+) site. Residue Glu-146 is the Proton donor/acceptor of the active site. His-202 is a Zn(2+) binding site.

The protein belongs to the aldolase class II family. MtnB subfamily. The cofactor is Zn(2+).

It is found in the cytoplasm. It catalyses the reaction 5-(methylsulfanyl)-D-ribulose 1-phosphate = 5-methylsulfanyl-2,3-dioxopentyl phosphate + H2O. It participates in amino-acid biosynthesis; L-methionine biosynthesis via salvage pathway; L-methionine from S-methyl-5-thio-alpha-D-ribose 1-phosphate: step 2/6. Its function is as follows. Catalyzes the dehydration of methylthioribulose-1-phosphate (MTRu-1-P) into 2,3-diketo-5-methylthiopentyl-1-phosphate (DK-MTP-1-P). The sequence is that of Methylthioribulose-1-phosphate dehydratase from Neosartorya fischeri (strain ATCC 1020 / DSM 3700 / CBS 544.65 / FGSC A1164 / JCM 1740 / NRRL 181 / WB 181) (Aspergillus fischerianus).